The chain runs to 81 residues: Cytotoxin 1a (81 aa).

The first 21 residues, 1 to 21 (MKTLLLTLVVVTIVCLDLGYT), serve as a signal peptide directing secretion. 4 disulfide bridges follow: Cys-24-Cys-42, Cys-35-Cys-59, Cys-63-Cys-74, and Cys-75-Cys-80.

Belongs to the three-finger toxin family. Short-chain subfamily. Type IA cytotoxin sub-subfamily. As to quaternary structure, monomer in solution; Homodimer and oligomer in the presence of negatively charged lipids forming a pore with a size ranging between 20 and 30 Angstroms. Expressed by the venom gland.

It is found in the secreted. The protein resides in the target cell membrane. Its function is as follows. Shows cytolytic activity on many different cells by forming pore in lipid membranes. In vivo, increases heart rate or kills the animal by cardiac arrest. In addition, it binds to heparin with high affinity, interacts with Kv channel-interacting protein 1 (KCNIP1) in a calcium-independent manner, and binds to integrin alpha-V/beta-3 (ITGAV/ITGB3) with moderate affinity. This chain is Cytotoxin 1a, found in Naja atra (Chinese cobra).